The chain runs to 250 residues: 26 kDa periplasmic immunogenic protein (250 aa).

Residues 1-28 (MNTRASNFLAASFSTIMLVGAFSLPAFA) form the signal peptide.

The protein resides in the periplasm. The polypeptide is 26 kDa periplasmic immunogenic protein (bp26) (Brucella abortus (strain S19)).